Consider the following 278-residue polypeptide: MEFDELMQCPYDKNHMIRPSRFPYHLVKCRENNRAAAKILATCPYNARHRVPKQELDLHMASCEYRVTMEPISAAFSHQKVETSTWQSPPCEEVWETDEDPVSRPKPFILNDFTPSQPFNMSEGDGNMPYTGISSNYRPEVQPMNSVMQVKQNQPEPEPFTSSERNYDPRSKEPPNPKQPAVNGYKPATTNTNPWCRQTGGSRGAAPPKLGAKSSDEGPRNKEFPTPKANLMNEYVPVAANANPWCRQPGGSSAASEPLGVDSFDEWPCLGRQPWVRK.

2 consecutive CHHC U11-48K-type zinc fingers follow at residues 6-33 (LMQC…RENN) and 40-67 (LATC…EYRV). Cys-9, His-15, His-25, Cys-29, Cys-43, His-49, His-59, and Cys-63 together coordinate Zn(2+). A compositionally biased stretch (polar residues) spans 149–164 (QVKQNQPEPEPFTSSE). 2 disordered regions span residues 149-230 (QVKQ…PKAN) and 249-278 (PGGS…WVRK). Basic and acidic residues predominate over residues 165 to 175 (RNYDPRSKEPP). A compositionally biased stretch (polar residues) spans 188 to 200 (ATTNTNPWCRQTG). Residues 214-225 (SSDEGPRNKEFP) are compositionally biased toward basic and acidic residues.

Belongs to the UPF0224 (FAM112) family.

The protein localises to the cytoplasm. Involved in oocyte maturation. It is possible that D7 is required at a certain point in the maturation process and that maturation cannot proceed beyond this point unless a threshold amount of D7 protein is provided. The sequence is that of Protein D7 (d7) from Xenopus laevis (African clawed frog).